A 352-amino-acid polypeptide reads, in one-letter code: CD5 antigen-like (352 aa).

Residues 1–21 (MAPLFNLMLAILSIFVGSCFS) form the signal peptide. 3 SRCR domains span residues 27–128 (VQLV…AQCE), 141–241 (VRLV…MECE), and 246–348 (LKLV…VICT). Disulfide bonds link C36-C70, C52-C117, C65-C127, C98-C108, C166-C230, C179-C240, C211-C221, C255-C289, C271-C337, C284-C347, and C317-C327. N99 carries an N-linked (GlcNAc...) asparagine glycan. An N-linked (GlcNAc...) asparagine glycan is attached at N229.

In terms of assembly, interacts with FASN; the interaction is direct. Interacts (via SRCR2 and SRCR3) with pentameric IgM (via Fc region); disulfide-linked. In terms of processing, N-glycosylated. N-glycan at Asn-99 possesses only alpha2,6-sialylated terminals, while Asn-229 possesses both alpha2,6-sialylated and non-sialylated terminals. N-glycosylation increases secretion. As to expression, specifically expressed in tissue macrophages. Expressed in thymus, liver, spleen and lymph nodes. Present in Th17 cells; mainly present in non-pathogenic Th17 cells.

The protein resides in the secreted. The protein localises to the cytoplasm. Its function is as follows. Secreted protein that acts as a key regulator of lipid synthesis: mainly expressed by macrophages in lymphoid and inflamed tissues and regulates mechanisms in inflammatory responses, such as infection or atherosclerosis. Able to inhibit lipid droplet size in adipocytes. Following incorporation into mature adipocytes via CD36-mediated endocytosis, associates with cytosolic FASN, inhibiting fatty acid synthase activity and leading to lipolysis, the degradation of triacylglycerols into glycerol and free fatty acids (FFA). CD5L-induced lipolysis occurs with progression of obesity: participates in obesity-associated inflammation following recruitment of inflammatory macrophages into adipose tissues, a cause of insulin resistance and obesity-related metabolic disease. Regulation of intracellular lipids mediated by CD5L has a direct effect on transcription regulation mediated by nuclear receptors ROR-gamma (RORC). Acts as a key regulator of metabolic switch in T-helper Th17 cells. Regulates the expression of pro-inflammatory genes in Th17 cells by altering the lipid content and limiting synthesis of cholesterol ligand of RORC, the master transcription factor of Th17-cell differentiation. CD5L is mainly present in non-pathogenic Th17 cells, where it decreases the content of polyunsaturated fatty acyls (PUFA), affecting two metabolic proteins MSMO1 and CYP51A1, which synthesize ligands of RORC, limiting RORC activity and expression of pro-inflammatory genes. Participates in obesity-associated autoimmunity via its association with IgM, interfering with the binding of IgM to Fcalpha/mu receptor and enhancing the development of long-lived plasma cells that produce high-affinity IgG autoantibodies. Also acts as an inhibitor of apoptosis in macrophages: promotes macrophage survival from the apoptotic effects of oxidized lipids in case of atherosclerosis. Involved in early response to microbial infection against various pathogens by acting as a pattern recognition receptor and by promoting autophagy. This is CD5 antigen-like (Cd5l) from Mus musculus (Mouse).